The following is a 396-amino-acid chain: MTQHDNDPAWPDHKPTALLVLADGTVLEGFGLGAEGHAVGEVCFNTAMTGYEEILTDPSYAGQLITFTFPHIGNVGTNEEDIETVNMAATPGARGVILRTAITDPSNYRATKHLDAWLKARGIIGLSGIDTRALTALIRSKGMPNAVIAHARNGEFDLHGLKEEAREWPGLEGMDLVPMVTSGQRFTWDETPWLWDKGFGQQDKTEFNVVAIDYGIKRNILRLLAGVGCKVTVVPATTSAEDILAMKPDGVFLSNGPGDPAATGKYAVPVIRDVIKSGTPTFGICLGHQMLGLAVGAKTKKMHQGHHGANHPVKDETTGKVEITSMNHGFAVDEKTLPKGATQTHISLFDGSNCGIQLDGKPVFSVQYHPEASPGPRDSHYLFQRFAELMRQKKSA.

The interval methionine 1 to lysine 204 is CPSase. Residues serine 59, glycine 256, and glycine 258 each contribute to the L-glutamine site. The Glutamine amidotransferase type-1 domain occupies asparagine 208–alanine 396. Cysteine 285 acts as the Nucleophile in catalysis. Residues leucine 286, glutamine 289, asparagine 327, glycine 329, and phenylalanine 330 each contribute to the L-glutamine site. Residues histidine 369 and glutamate 371 contribute to the active site.

This sequence belongs to the CarA family. In terms of assembly, composed of two chains; the small (or glutamine) chain promotes the hydrolysis of glutamine to ammonia, which is used by the large (or ammonia) chain to synthesize carbamoyl phosphate. Tetramer of heterodimers (alpha,beta)4.

It carries out the reaction hydrogencarbonate + L-glutamine + 2 ATP + H2O = carbamoyl phosphate + L-glutamate + 2 ADP + phosphate + 2 H(+). The enzyme catalyses L-glutamine + H2O = L-glutamate + NH4(+). It functions in the pathway amino-acid biosynthesis; L-arginine biosynthesis; carbamoyl phosphate from bicarbonate: step 1/1. The protein operates within pyrimidine metabolism; UMP biosynthesis via de novo pathway; (S)-dihydroorotate from bicarbonate: step 1/3. Functionally, small subunit of the glutamine-dependent carbamoyl phosphate synthetase (CPSase). CPSase catalyzes the formation of carbamoyl phosphate from the ammonia moiety of glutamine, carbonate, and phosphate donated by ATP, constituting the first step of 2 biosynthetic pathways, one leading to arginine and/or urea and the other to pyrimidine nucleotides. The small subunit (glutamine amidotransferase) binds and cleaves glutamine to supply the large subunit with the substrate ammonia. In Bradyrhizobium diazoefficiens (strain JCM 10833 / BCRC 13528 / IAM 13628 / NBRC 14792 / USDA 110), this protein is Carbamoyl phosphate synthase small chain.